Here is a 459-residue protein sequence, read N- to C-terminus: Friend virus susceptibility protein 1 (459 aa).

Residues 192 to 269 (EAELPTVLAS…LNSLAHSNRQ (78 aa)) form a disordered region. Residues 213–223 (SKERTQQDKAD) are compositionally biased toward basic and acidic residues. Over residues 226–238 (QIQSSTSLVTSEP) the composition is skewed to polar residues.

Its function is as follows. Retroviral restriction factor that prevents infection by gammaretroviruses. Acts by interacting with the capsid protein ca after entry of the virus into the cell. This interaction presumably disrupt the capsid thereby inactivating the viral genome, making it unable to enter host nucleus and integrate into host genome. This chain is Friend virus susceptibility protein 1 (Fv1), found in Mus musculus (Mouse).